Here is a 229-residue protein sequence, read N- to C-terminus: Ribonuclease 3 (229 aa).

Residues 5–127 enclose the RNase III domain; sequence LSRLERQLGY…LIGAIYLDAG (123 aa). Glutamate 40 contacts Mg(2+). The active site involves aspartate 44. Positions 113 and 116 each coordinate Mg(2+). Glutamate 116 is a catalytic residue. The 71-residue stretch at 154-224 folds into the DRBM domain; it reads DPKTRLQEFL…AAAALIALGV (71 aa).

It belongs to the ribonuclease III family. As to quaternary structure, homodimer. The cofactor is Mg(2+).

Its subcellular location is the cytoplasm. It carries out the reaction Endonucleolytic cleavage to 5'-phosphomonoester.. Digests double-stranded RNA. Involved in the processing of primary rRNA transcript to yield the immediate precursors to the large and small rRNAs (23S and 16S). Processes some mRNAs, and tRNAs when they are encoded in the rRNA operon. Processes pre-crRNA and tracrRNA of type II CRISPR loci if present in the organism. The chain is Ribonuclease 3 from Pseudomonas fluorescens (strain Pf0-1).